The primary structure comprises 389 residues: Na(+)/H(+) antiporter NhaA (389 aa).

11 consecutive transmembrane segments (helical) span residues 14 to 34 (AGGILLLVAVALAMLMANSPL), 59 to 79 (LILWINDGLMAVFFLLIGLEV), 95 to 115 (SLPTFAAIGGMLVPAGVYLLF), 124 to 144 (AGWAIPAATDIAFALGIMALL), 154 to 174 (VFLLALAIIDDLGVIVIIALF), 177 to 197 (TDLSTISLVIASLAIAGLVGL), 213 to 233 (LILWVAVLKSGVHATLAGVII), 257 to 277 (PWSTFFILPVFAFANAGVYVG), 292 to 312 (IALGLMLGKPIGVMVFSYIAV), 328 to 348 (IAPVAAMCGIGFTMSMFIASL), and 363 to 383 (LGTLIGSIMAALVGYFWLSKV).

This sequence belongs to the NhaA Na(+)/H(+) (TC 2.A.33) antiporter family.

Its subcellular location is the cell inner membrane. It catalyses the reaction Na(+)(in) + 2 H(+)(out) = Na(+)(out) + 2 H(+)(in). Na(+)/H(+) antiporter that extrudes sodium in exchange for external protons. The sequence is that of Na(+)/H(+) antiporter NhaA from Shewanella baltica (strain OS155 / ATCC BAA-1091).